Consider the following 606-residue polypeptide: UvrABC system protein C (606 aa).

One can recognise a GIY-YIG domain in the interval 18-96 (SQPGVYRMMN…IKSLNPRYNI (79 aa)). The 36-residue stretch at 205-240 (TEVLKSITRKMHEAAEEQEYEQAALFRDQIQSLRKI) folds into the UVR domain.

The protein belongs to the UvrC family. In terms of assembly, interacts with UvrB in an incision complex.

It localises to the cytoplasm. Functionally, the UvrABC repair system catalyzes the recognition and processing of DNA lesions. UvrC both incises the 5' and 3' sides of the lesion. The N-terminal half is responsible for the 3' incision and the C-terminal half is responsible for the 5' incision. The sequence is that of UvrABC system protein C from Nitrosospira multiformis (strain ATCC 25196 / NCIMB 11849 / C 71).